We begin with the raw amino-acid sequence, 131 residues long: ATP synthase epsilon chain, chloroplastic (131 aa).

This sequence belongs to the ATPase epsilon chain family. In terms of assembly, F-type ATPases have 2 components, CF(1) - the catalytic core - and CF(0) - the membrane proton channel. CF(1) has five subunits: alpha(3), beta(3), gamma(1), delta(1), epsilon(1). CF(0) has three main subunits: a, b and c.

The protein localises to the plastid. It localises to the chloroplast thylakoid membrane. Functionally, produces ATP from ADP in the presence of a proton gradient across the membrane. This is ATP synthase epsilon chain, chloroplastic from Oltmannsiellopsis viridis (Marine flagellate).